A 277-amino-acid polypeptide reads, in one-letter code: Release factor glutamine methyltransferase (277 aa).

S-adenosyl-L-methionine-binding positions include 120–124, aspartate 143, tryptophan 171, and asparagine 186; that span reads GTGSG. 186-189 lines the substrate pocket; that stretch reads NPPY.

It belongs to the protein N5-glutamine methyltransferase family. PrmC subfamily.

It carries out the reaction L-glutaminyl-[peptide chain release factor] + S-adenosyl-L-methionine = N(5)-methyl-L-glutaminyl-[peptide chain release factor] + S-adenosyl-L-homocysteine + H(+). Functionally, methylates the class 1 translation termination release factors RF1/PrfA and RF2/PrfB on the glutamine residue of the universally conserved GGQ motif. The sequence is that of Release factor glutamine methyltransferase from Coxiella burnetii (strain RSA 493 / Nine Mile phase I).